The chain runs to 458 residues: Cysteine protease ATG4C (458 aa).

Residue M1 is modified to N-acetylmethionine. Residue C111 is the Nucleophile of the active site. Residues D345 and H347 contribute to the active site. S451 is subject to Phosphoserine. At T452 the chain carries Phosphothreonine.

This sequence belongs to the peptidase C54 family.

It localises to the cytoplasm. The catalysed reaction is [protein]-C-terminal L-amino acid-glycyl-phosphatidylethanolamide + H2O = [protein]-C-terminal L-amino acid-glycine + a 1,2-diacyl-sn-glycero-3-phosphoethanolamine. With respect to regulation, inhibited by N-ethylmaleimide. Its function is as follows. Cysteine protease that plays a key role in autophagy by mediating both proteolytic activation and delipidation of ATG8 family proteins. The protease activity is required for proteolytic activation of ATG8 family proteins: cleaves the C-terminal amino acid of ATG8 proteins MAP1LC3 and GABARAPL2, to reveal a C-terminal glycine. Exposure of the glycine at the C-terminus is essential for ATG8 proteins conjugation to phosphatidylethanolamine (PE) and insertion to membranes, which is necessary for autophagy. In addition to the protease activity, also mediates delipidation of ATG8 family proteins. Catalyzes delipidation of PE-conjugated forms of ATG8 proteins during macroautophagy. Compared to ATG4B, the major protein for proteolytic activation of ATG8 proteins, shows weaker ability to cleave the C-terminal amino acid of ATG8 proteins, while it displays stronger delipidation activity. In contrast to other members of the family, weakly or not involved in phagophore growth during mitophagy. The protein is Cysteine protease ATG4C of Homo sapiens (Human).